Reading from the N-terminus, the 614-residue chain is Syringomycin synthase SyrB1 (614 aa).

The Carrier domain occupies 535–610; it reads KGLSEQEHFV…VLADHITRSL (76 aa). The residue at position 570 (serine 570) is an O-(pantetheine 4'-phosphoryl)serine.

Belongs to the ATP-dependent AMP-binding enzyme family. Requires pantetheine 4'-phosphate as cofactor.

The enzyme catalyses holo-[peptidyl-carrier protein] + L-threonine + ATP = L-threonyl-[peptidyl-carrier protein] + AMP + diphosphate. Functionally, involved in the biosynthesis of syringomycin E, a cyclic lipodepsinonapeptide toxin with phytotoxic activity. Specifically adenylates L-threonine and loads it onto its peptidyl carrier domain, via a thioester linkage to the phosphopanthetheine moiety. Is highly specific for L-threonine. The sequence is that of Syringomycin synthase SyrB1 from Pseudomonas syringae pv. syringae.